A 256-amino-acid chain; its full sequence is Probable ABC transporter ATP-binding protein SPy_0285/M5005_Spy0242 (256 aa).

One can recognise an ABC transporter domain in the interval 4-246 (LEINNLHVSI…EKEGYAGIAQ (243 aa)). Residue 36-43 (GPNGTGKS) coordinates ATP.

Belongs to the ABC transporter superfamily. Ycf16 family.

Its subcellular location is the cell membrane. The sequence is that of Probable ABC transporter ATP-binding protein SPy_0285/M5005_Spy0242 from Streptococcus pyogenes serotype M1.